A 359-amino-acid polypeptide reads, in one-letter code: tRNA N6-adenosine threonylcarbamoyltransferase (359 aa).

Fe cation contacts are provided by histidine 115 and histidine 119. Substrate-binding positions include 137–141 (LVSGG), aspartate 170, glycine 183, and asparagine 283. Residue aspartate 311 participates in Fe cation binding. The segment at 328 to 359 (APDSLDIAPRSRWPLDEKSAPVFGTGRRGAKA) is disordered.

It belongs to the KAE1 / TsaD family. It depends on Fe(2+) as a cofactor.

The protein localises to the cytoplasm. The catalysed reaction is L-threonylcarbamoyladenylate + adenosine(37) in tRNA = N(6)-L-threonylcarbamoyladenosine(37) in tRNA + AMP + H(+). Functionally, required for the formation of a threonylcarbamoyl group on adenosine at position 37 (t(6)A37) in tRNAs that read codons beginning with adenine. Is involved in the transfer of the threonylcarbamoyl moiety of threonylcarbamoyl-AMP (TC-AMP) to the N6 group of A37, together with TsaE and TsaB. TsaD likely plays a direct catalytic role in this reaction. The protein is tRNA N6-adenosine threonylcarbamoyltransferase of Brucella ovis (strain ATCC 25840 / 63/290 / NCTC 10512).